We begin with the raw amino-acid sequence, 318 residues long: Formimidoylglutamase (318 aa).

Mn(2+) contacts are provided by His-130, Asp-155, His-157, Asp-159, Asp-246, and Asp-248.

The protein belongs to the arginase family. It depends on Mn(2+) as a cofactor.

The enzyme catalyses N-formimidoyl-L-glutamate + H2O = formamide + L-glutamate. The protein operates within amino-acid degradation; L-histidine degradation into L-glutamate; L-glutamate from N-formimidoyl-L-glutamate (hydrolase route): step 1/1. In terms of biological role, catalyzes the conversion of N-formimidoyl-L-glutamate to L-glutamate and formamide. In Klebsiella pneumoniae subsp. pneumoniae (strain ATCC 700721 / MGH 78578), this protein is Formimidoylglutamase.